Reading from the N-terminus, the 203-residue chain is ATP-dependent Clp protease proteolytic subunit (203 aa).

The Nucleophile role is filled by serine 107. Histidine 132 is a catalytic residue.

This sequence belongs to the peptidase S14 family. In terms of assembly, fourteen ClpP subunits assemble into 2 heptameric rings which stack back to back to give a disk-like structure with a central cavity, resembling the structure of eukaryotic proteasomes.

It localises to the cytoplasm. The catalysed reaction is Hydrolysis of proteins to small peptides in the presence of ATP and magnesium. alpha-casein is the usual test substrate. In the absence of ATP, only oligopeptides shorter than five residues are hydrolyzed (such as succinyl-Leu-Tyr-|-NHMec, and Leu-Tyr-Leu-|-Tyr-Trp, in which cleavage of the -Tyr-|-Leu- and -Tyr-|-Trp bonds also occurs).. Its function is as follows. Cleaves peptides in various proteins in a process that requires ATP hydrolysis. Has a chymotrypsin-like activity. Plays a major role in the degradation of misfolded proteins. The sequence is that of ATP-dependent Clp protease proteolytic subunit from Thermotoga maritima (strain ATCC 43589 / DSM 3109 / JCM 10099 / NBRC 100826 / MSB8).